A 156-amino-acid chain; its full sequence is U4/U6.U5 small nuclear ribonucleoprotein 27 kDa protein (156 aa).

A disordered region spans residues 1-98 (MGRSRSRSPE…IAAEDLEGKT (98 aa)). A compositionally biased stretch (basic residues) spans 13–59 (RERRRSRSASRERERRRRERSRSRERRRSRSRSPHRRRSRSPRRHRS). Basic and acidic residues predominate over residues 66–98 (RLKDRRDDDKKDSKESKGAKERQIAAEDLEGKT).

This sequence belongs to the SNUT3 family. Part of a tri-snRNP complex.

The protein resides in the nucleus. Functionally, may play a role in mRNA splicing. In Xenopus tropicalis (Western clawed frog), this protein is U4/U6.U5 small nuclear ribonucleoprotein 27 kDa protein (snrnp27).